A 468-amino-acid polypeptide reads, in one-letter code: Keratin, type I cytoskeletal 26 (468 aa).

Residues M1–N82 form a head region. The tract at residues E83 to W118 is coil 1A. Residues E83–S398 form the IF rod domain. Residues Y119–V140 are linker 1. The segment at I141–L232 is coil 1B. The segment at Q233–L255 is linker 12. Residues L256–E394 are coil 2. Residues E395–S465 are tail.

It belongs to the intermediate filament family. In terms of assembly, heterotetramer of two type I and two type II keratins. As to expression, strongly expressed in skin and scalp, and weak expression observed in thymus and tongue. In the hair follicle, expression is restricted to the mid- to upper inner root sheath cuticle, being present slightly above the apex of the dermal papilla (at protein level).

This Homo sapiens (Human) protein is Keratin, type I cytoskeletal 26.